Reading from the N-terminus, the 410-residue chain is Acetate kinase (410 aa).

N7 provides a ligand contact to Mg(2+). Position 14 (K14) interacts with ATP. R88 is a substrate binding site. D145 functions as the Proton donor/acceptor in the catalytic mechanism. ATP is bound by residues 203 to 207 (HAGNG), 278 to 280 (DTR), and 326 to 330 (GIGEN). Position 379 (E379) interacts with Mg(2+).

The protein belongs to the acetokinase family. As to quaternary structure, homodimer. It depends on Mg(2+) as a cofactor. Mn(2+) serves as cofactor.

It is found in the cytoplasm. The enzyme catalyses acetate + ATP = acetyl phosphate + ADP. Its pathway is metabolic intermediate biosynthesis; acetyl-CoA biosynthesis; acetyl-CoA from acetate: step 1/2. In terms of biological role, catalyzes the formation of acetyl phosphate from acetate and ATP. Can also catalyze the reverse reaction. This is Acetate kinase from Chlorante-Aster yellows phytoplasma.